The sequence spans 142 residues: Putative pre-16S rRNA nuclease (142 aa).

It belongs to the YqgF nuclease family.

It localises to the cytoplasm. Could be a nuclease involved in processing of the 5'-end of pre-16S rRNA. This chain is Putative pre-16S rRNA nuclease, found in Desulfitobacterium hafniense (strain DSM 10664 / DCB-2).